Consider the following 86-residue polypeptide: Translation initiation factor IF-1 3 (86 aa).

Positions 1 to 72 (MAKEELIEMQ…NKGRVTFRHI (72 aa)) constitute an S1-like domain.

The protein belongs to the IF-1 family. Component of the 30S ribosomal translation pre-initiation complex which assembles on the 30S ribosome in the order IF-2 and IF-3, IF-1 and N-formylmethionyl-tRNA(fMet); mRNA recruitment can occur at any time during PIC assembly.

It is found in the cytoplasm. Its function is as follows. One of the essential components for the initiation of protein synthesis. Stabilizes the binding of IF-2 and IF-3 on the 30S subunit to which N-formylmethionyl-tRNA(fMet) subsequently binds. Helps modulate mRNA selection, yielding the 30S pre-initiation complex (PIC). Upon addition of the 50S ribosomal subunit IF-1, IF-2 and IF-3 are released leaving the mature 70S translation initiation complex. The polypeptide is Translation initiation factor IF-1 3 (Acidovorax sp. (strain JS42)).